A 222-amino-acid chain; its full sequence is Adapter protein MecA (222 aa).

Belongs to the MecA family. Homodimer.

In terms of biological role, enables the recognition and targeting of unfolded and aggregated proteins to the ClpC protease or to other proteins involved in proteolysis. The sequence is that of Adapter protein MecA from Lysinibacillus sphaericus (strain C3-41).